Consider the following 110-residue polypeptide: MVMSRGFNPMQQVKALQDKMARMQEELALKTVEASAGGGMVAVVVNGRQEVLSVKVDRQVVDPEDIEMLQDLIVAAVNDGLRKSQEMAAQEMGKIAGGLNIPGLKIPGLF.

The protein belongs to the YbaB/EbfC family. In terms of assembly, homodimer.

The protein resides in the cytoplasm. It is found in the nucleoid. In terms of biological role, binds to DNA and alters its conformation. May be involved in regulation of gene expression, nucleoid organization and DNA protection. The polypeptide is Nucleoid-associated protein Sfum_2790 (Syntrophobacter fumaroxidans (strain DSM 10017 / MPOB)).